The following is a 952-amino-acid chain: Isoleucine--tRNA ligase (952 aa).

Residues 58 to 68 (PYANGDIHIGH) carry the 'HIGH' region motif. E576 is a binding site for L-isoleucyl-5'-AMP. The 'KMSKS' region signature appears at 617–621 (KMSKS). Residue K620 coordinates ATP. 4 residues coordinate Zn(2+): C915, C918, C935, and C938.

The protein belongs to the class-I aminoacyl-tRNA synthetase family. IleS type 1 subfamily. In terms of assembly, monomer. The cofactor is Zn(2+).

It is found in the cytoplasm. It catalyses the reaction tRNA(Ile) + L-isoleucine + ATP = L-isoleucyl-tRNA(Ile) + AMP + diphosphate. Its function is as follows. Catalyzes the attachment of isoleucine to tRNA(Ile). As IleRS can inadvertently accommodate and process structurally similar amino acids such as valine, to avoid such errors it has two additional distinct tRNA(Ile)-dependent editing activities. One activity is designated as 'pretransfer' editing and involves the hydrolysis of activated Val-AMP. The other activity is designated 'posttransfer' editing and involves deacylation of mischarged Val-tRNA(Ile). The chain is Isoleucine--tRNA ligase from Aliivibrio fischeri (strain ATCC 700601 / ES114) (Vibrio fischeri).